Consider the following 132-residue polypeptide: Large ribosomal subunit protein uL22c (132 aa).

The protein belongs to the universal ribosomal protein uL22 family. Part of the 50S ribosomal subunit.

Its subcellular location is the plastid. The protein localises to the chloroplast. This protein binds specifically to 23S rRNA. Its function is as follows. The globular domain of the protein is located near the polypeptide exit tunnel on the outside of the subunit, while an extended beta-hairpin is found that lines the wall of the exit tunnel in the center of the 70S ribosome. The polypeptide is Large ribosomal subunit protein uL22c (rpl22) (Populus trichocarpa (Western balsam poplar)).